A 649-amino-acid polypeptide reads, in one-letter code: Lysophospholipase (649 aa).

The N-terminal stretch at 1–21 (MNLKEWLLFSDAVFFAQGTLA) is a signal peptide. N-linked (GlcNAc...) asparagine glycans are attached at residues N32, N51, N77, N90, N121, N158, N168, N213, N275, N343, N386, N457, N487, N511, N539, N563, and N580. Residues 34–584 (SCDEDINLIR…TNYCWNGTID (551 aa)) form the PLA2c domain.

This sequence belongs to the lysophospholipase family.

The protein resides in the secreted. It catalyses the reaction a 1-acyl-sn-glycero-3-phosphocholine + H2O = sn-glycerol 3-phosphocholine + a fatty acid + H(+). Its function is as follows. Catalyzes the release of fatty acids from lysophospholipids. The chain is Lysophospholipase from Torulaspora delbrueckii (Yeast).